Here is a 74-residue protein sequence, read N- to C-terminus: Omwaprin-b (74 aa).

A signal peptide spans 1-24; the sequence is MSSGGLLLLLGLLTLWEVLTPVSS. The WAP domain maps to 27 to 71; sequence RPKKPGLCPPRPQKPCVKECKNDWSCPGQQKCCNYGCIDECRDPI. Disulfide bonds link Cys-34–Cys-59, Cys-42–Cys-63, Cys-46–Cys-58, and Cys-52–Cys-67.

It belongs to the venom waprin family. Expressed by the venom gland.

It is found in the secreted. Its function is as follows. Damages membranes of susceptible bacteria. Has antibacterial activity against the Gram-positive bacteria B.megaterium and S.warneri. After 45 minutes of treatment with this protein, B.megaterium have no visible pili and are smooth. Has no antibacterial activity against the Gram-positive bacteria B.thuringiensis, S.aureus, S.clavuligerus and B. anthracis, or the Gram-negative bacteria E.coli and A.tumefaciens. Has no hemolytic activity. Does not inhibit the proteinases elastase and cathepsin G. Is not toxic to mice. The sequence is that of Omwaprin-b from Oxyuranus microlepidotus (Inland taipan).